The chain runs to 278 residues: NADPH-dependent 7-cyano-7-deazaguanine reductase (278 aa).

Isoleucine 87–serine 89 contributes to the substrate binding site. NADPH is bound at residue serine 89–lysine 90. The Thioimide intermediate role is filled by cysteine 185. Aspartate 192 (proton donor) is an active-site residue. Position 224–225 (histidine 224–glutamate 225) interacts with substrate. Arginine 253–glycine 254 contributes to the NADPH binding site. A disordered region spans residues glycine 255 to glutamine 278. Positions tyrosine 261–glutamine 278 are enriched in polar residues.

This sequence belongs to the GTP cyclohydrolase I family. QueF type 2 subfamily. In terms of assembly, homodimer.

The protein localises to the cytoplasm. The enzyme catalyses 7-aminomethyl-7-carbaguanine + 2 NADP(+) = 7-cyano-7-deazaguanine + 2 NADPH + 3 H(+). Its pathway is tRNA modification; tRNA-queuosine biosynthesis. Functionally, catalyzes the NADPH-dependent reduction of 7-cyano-7-deazaguanine (preQ0) to 7-aminomethyl-7-deazaguanine (preQ1). The polypeptide is NADPH-dependent 7-cyano-7-deazaguanine reductase (Coxiella burnetii (strain Dugway 5J108-111)).